We begin with the raw amino-acid sequence, 282 residues long: Formamidopyrimidine-DNA glycosylase (282 aa).

The active-site Schiff-base intermediate with DNA is the proline 2. The Proton donor role is filled by glutamate 3. Lysine 60 serves as the catalytic Proton donor; for beta-elimination activity. The DNA site is built by histidine 99, arginine 118, and lysine 163. The FPG-type zinc finger occupies tryptophan 248–lysine 282. Arginine 272 serves as the catalytic Proton donor; for delta-elimination activity.

This sequence belongs to the FPG family. As to quaternary structure, monomer. Zn(2+) serves as cofactor.

The enzyme catalyses Hydrolysis of DNA containing ring-opened 7-methylguanine residues, releasing 2,6-diamino-4-hydroxy-5-(N-methyl)formamidopyrimidine.. It catalyses the reaction 2'-deoxyribonucleotide-(2'-deoxyribose 5'-phosphate)-2'-deoxyribonucleotide-DNA = a 3'-end 2'-deoxyribonucleotide-(2,3-dehydro-2,3-deoxyribose 5'-phosphate)-DNA + a 5'-end 5'-phospho-2'-deoxyribonucleoside-DNA + H(+). In terms of biological role, involved in base excision repair of DNA damaged by oxidation or by mutagenic agents. Acts as a DNA glycosylase that recognizes and removes damaged bases. Has a preference for oxidized purines, such as 7,8-dihydro-8-oxoguanine (8-oxoG). Has AP (apurinic/apyrimidinic) lyase activity and introduces nicks in the DNA strand. Cleaves the DNA backbone by beta-delta elimination to generate a single-strand break at the site of the removed base with both 3'- and 5'-phosphates. This Prochlorococcus marinus (strain NATL2A) protein is Formamidopyrimidine-DNA glycosylase.